The primary structure comprises 773 residues: MSSPAVARTSPGGSREMAPAPQGRGRFWEVGGGSGHRLERAAAESERWELLLRRGELLALGGHLKGALEAFAAALRRGAPARPECLGALVDCLVFNYRLRHGLGWSAAPVAGADGGAGGLLRCLGCRGFLSEPVTVPCGHSYCRRCLRRELRARCRLCRDRLPPATASATDAEGTAPRPPPLAAAIAASDFRTSVVLNHLAEKWFPGQRERARAAGRLGELLHQGRYREALAAACEALRAEPSDLIVKIYRAESYAGLQEFKAAIEDLNAVLFQLPDWPEVYFRKGKVLCDAGFLGDALQLFLQCLALDEDFAPAKLQVQKILCDLLLPENLKEGLKESSWSSLPCTKNRPFDFHSVMEESQSLNEPSPKQSEEIPEVTSEPVKGSLNRAQSAQSINSTEMPAREDCLKRVSSEPVLSVQEKGVLLKRKLSLLEQDVIVNEDGRNKLKKQGETPNEVCMFSLAYGDIPEELIDVSDFECSLCMRLFFEPVTTPCGHSFCKNCLERCLDHAPYCPLCKESLKEYLADRRYCVTQLLEELIVKYLPDELSERKKIYDEETAELSHLTKNVPIFVCTMAYPTVPCPLHVFEPRYRLMIRRSIQTGTKQFGMCVSDTQNSFADYGCMLQIRNVHFLPDGRSVVDTVGGKRFRVLKRGMKDGYCTADIEYLEDVKVENEDEIKNLRELHDLVYSQACSWFQNLRDRFRSQILQHFGSMPEREENLQAAPNGPAWCWWLLAVLPVDPRYQLSVLSMKSLKERLTKIQHILTYFSRDQSK.

The disordered stretch occupies residues 1-29 (MSSPAVARTSPGGSREMAPAPQGRGRFWE). A TPR 1 repeat occupies 48–81 (WELLLRRGELLALGGHLKGALEAFAAALRRGAPA). Residues 123 to 159 (CLGCRGFLSEPVTVPCGHSYCRRCLRRELRARCRLCR) form an RING-type 1 zinc finger. TPR repeat units lie at residues 212–244 (ARAA…EPSD), 246–278 (IVKI…LPDW), and 279–312 (PEVY…DEDF). Residues 359–370 (EESQSLNEPSPK) show a composition bias toward polar residues. Residues 359-388 (EESQSLNEPSPKQSEEIPEVTSEPVKGSLN) are disordered. Phosphoserine is present on Ser431. The segment at 479–517 (CSLCMRLFFEPVTTPCGHSFCKNCLERCLDHAPYCPLCK) adopts an RING-type 2 zinc-finger fold. The region spanning 558 to 768 (TAELSHLTKN…KIQHILTYFS (211 aa)) is the Lon N-terminal domain.

The polypeptide is LON peptidase N-terminal domain and RING finger protein 1 (LONRF1) (Homo sapiens (Human)).